A 157-amino-acid chain; its full sequence is Neutrophil recruitment protein (157 aa).

A signal peptide spans 1–19 (MCSIWLTFFLSFLILNTKA).

The protein belongs to the PBP/GOBP family. In terms of assembly, interacts with mouse TLR1; the interaction promotes activation of canonical NF-kappa-B signaling in host macrophages. Interacts with human TLR1. Interacts with mouse TLR4; the interaction promotes activation of canonical NF-kappa-B signaling in host macrophages. Interacts with human TLR4. Female salivary gland (at protein level).

It is found in the secreted. Activates MyD88-dependent canonical NF-kappa-B signaling in host macrophages via interaction with host TLR1 and TLR4; this drives the expression of neutrophil chemoattractants, followed by the subsequent influx of neutrophils and recruitment of myeloid cells at the bite site. In terms of biological role, (Microbial infection) Promotes Zika virus infection in mouse model by facilitating recruitment of flavivirus-permissive myeloid cells at the bite site. Functionally, (Microbial infection) Promotes dengue virus infection in mouse model by facilitating recruitment of flavivirus-permissive myeloid cells at the bite site. In Aedes aegypti (Yellowfever mosquito), this protein is Neutrophil recruitment protein.